Consider the following 153-residue polypeptide: Ribosome maturation factor RimP (153 aa).

Belongs to the RimP family.

It localises to the cytoplasm. Functionally, required for maturation of 30S ribosomal subunits. In Vesicomyosocius okutanii subsp. Calyptogena okutanii (strain HA), this protein is Ribosome maturation factor RimP.